A 219-amino-acid polypeptide reads, in one-letter code: Large ribosomal subunit protein uL16 (219 aa).

Belongs to the universal ribosomal protein uL16 family. In terms of assembly, component of the large ribosomal subunit. Mature ribosomes consist of a small (40S) and a large (60S) subunit. The 40S subunit contains about 33 different proteins and 1 molecule of RNA (18S). The 60S subunit contains about 49 different proteins and 3 molecules of RNA (28S, 5.8S and 5S).

This Bombyx mandarina (Wild silk moth) protein is Large ribosomal subunit protein uL16 (RpL10).